A 127-amino-acid polypeptide reads, in one-letter code: DNA-directed RNA polymerase subunit omega (127 aa).

This sequence belongs to the RNA polymerase subunit omega family. The RNAP catalytic core consists of 2 alpha, 1 beta, 1 beta' and 1 omega subunit. When a sigma factor is associated with the core the holoenzyme is formed, which can initiate transcription.

The catalysed reaction is RNA(n) + a ribonucleoside 5'-triphosphate = RNA(n+1) + diphosphate. Its function is as follows. Promotes RNA polymerase assembly. Latches the N- and C-terminal regions of the beta' subunit thereby facilitating its interaction with the beta and alpha subunits. The chain is DNA-directed RNA polymerase subunit omega from Rickettsia peacockii (strain Rustic).